We begin with the raw amino-acid sequence, 287 residues long: Bifunctional protein FolD (287 aa).

NADP(+) is bound by residues 166 to 168 (GAS) and isoleucine 232.

This sequence belongs to the tetrahydrofolate dehydrogenase/cyclohydrolase family. Homodimer.

The catalysed reaction is (6R)-5,10-methylene-5,6,7,8-tetrahydrofolate + NADP(+) = (6R)-5,10-methenyltetrahydrofolate + NADPH. It catalyses the reaction (6R)-5,10-methenyltetrahydrofolate + H2O = (6R)-10-formyltetrahydrofolate + H(+). Its pathway is one-carbon metabolism; tetrahydrofolate interconversion. Catalyzes the oxidation of 5,10-methylenetetrahydrofolate to 5,10-methenyltetrahydrofolate and then the hydrolysis of 5,10-methenyltetrahydrofolate to 10-formyltetrahydrofolate. The polypeptide is Bifunctional protein FolD (Aeromonas salmonicida (strain A449)).